Consider the following 61-residue polypeptide: Small ribosomal subunit protein uS14 (61 aa).

Residues Cys-24, Cys-27, Cys-40, and Cys-43 each contribute to the Zn(2+) site.

It belongs to the universal ribosomal protein uS14 family. Zinc-binding uS14 subfamily. Part of the 30S ribosomal subunit. Contacts proteins S3 and S10. Requires Zn(2+) as cofactor.

Functionally, binds 16S rRNA, required for the assembly of 30S particles and may also be responsible for determining the conformation of the 16S rRNA at the A site. The sequence is that of Small ribosomal subunit protein uS14 from Thermoanaerobacter sp. (strain X514).